Here is a 653-residue protein sequence, read N- to C-terminus: TRAF3-interacting protein 1 (653 aa).

The tract at residues 1 to 306 (MNAAVVRRTQ…ADKSEKKADI (306 aa)) is abolishes microtubules binding when missing. The segment at 134 to 467 (GDSRGRVLRT…DSQNSDNEDD (334 aa)) is disordered. Basic and acidic residues-rich tracts occupy residues 145–305 (KAQE…KKAD), 325–335 (NSLEGRKEDNI), and 370–384 (ENAE…KGDS). The tract at residues 229–653 (RAKQDRDRNN…VHSINLSSRR (425 aa)) is DISC1-interaction domain. Serine 437 is modified (phosphoserine). Polar residues predominate over residues 448–462 (SGKTVSTVIIDSQNS). The stretch at 533-628 (AWKKEKDIVS…IKDQQDKICA (96 aa)) forms a coiled coil.

The protein belongs to the TRAF3IP1 family. In terms of assembly, component of the IFT complex B, at least composed of IFT20, IFT22, IFT25, IFT27, IFT46, IFT52, TRAF3IP1/IFT54, IFT57, IFT74, IFT80, IFT81, and IFT88. Interacts with IFT88. Interacts with IL13RA1. Binds to microtubules, TRAF3 and DISC1. Interacts with MAP4.

The protein resides in the cytoplasm. The protein localises to the cytoskeleton. Its subcellular location is the cell projection. It localises to the cilium. It is found in the cilium axoneme. The protein resides in the cilium basal body. Its function is as follows. Plays an inhibitory role on IL13 signaling by binding to IL13RA1. Involved in suppression of IL13-induced STAT6 phosphorylation, transcriptional activity and DNA-binding. Recruits TRAF3 and DISC1 to the microtubules. Involved in kidney development and epithelial morphogenesis. Involved in the regulation of microtubule cytoskeleton organization. Is a negative regulator of microtubule stability, acting through the control of MAP4 levels. Involved in ciliogenesis. In Rattus norvegicus (Rat), this protein is TRAF3-interacting protein 1 (Traf3ip1).